Consider the following 56-residue polypeptide: Sec-independent protein translocase protein TatA (56 aa).

A helical transmembrane segment spans residues 1 to 21; sequence MALGPWQIFLILVIILVLFGA.

The protein belongs to the TatA/E family. The Tat system comprises two distinct complexes: a TatABC complex, containing multiple copies of TatA, TatB and TatC subunits, and a separate TatA complex, containing only TatA subunits. Substrates initially bind to the TatABC complex, which probably triggers association of the separate TatA complex to form the active translocon.

It is found in the cell inner membrane. In terms of biological role, part of the twin-arginine translocation (Tat) system that transports large folded proteins containing a characteristic twin-arginine motif in their signal peptide across membranes. TatA could form the protein-conducting channel of the Tat system. This is Sec-independent protein translocase protein TatA from Ehrlichia ruminantium (strain Welgevonden).